Here is a 72-residue protein sequence, read N- to C-terminus: Translation initiation factor IF-1 (72 aa).

Positions 1–72 (MAKEETIQMQ…SRARITFRAK (72 aa)) constitute an S1-like domain.

Belongs to the IF-1 family. In terms of assembly, component of the 30S ribosomal translation pre-initiation complex which assembles on the 30S ribosome in the order IF-2 and IF-3, IF-1 and N-formylmethionyl-tRNA(fMet); mRNA recruitment can occur at any time during PIC assembly.

It is found in the cytoplasm. Its function is as follows. One of the essential components for the initiation of protein synthesis. Stabilizes the binding of IF-2 and IF-3 on the 30S subunit to which N-formylmethionyl-tRNA(fMet) subsequently binds. Helps modulate mRNA selection, yielding the 30S pre-initiation complex (PIC). Upon addition of the 50S ribosomal subunit IF-1, IF-2 and IF-3 are released leaving the mature 70S translation initiation complex. This Nitrosospira multiformis (strain ATCC 25196 / NCIMB 11849 / C 71) protein is Translation initiation factor IF-1.